The following is a 245-amino-acid chain: 2,3-bisphosphoglycerate-dependent phosphoglycerate mutase (245 aa).

Residues 8-15 (RHGQSLWN), 21-22 (TG), Arg-60, 87-90 (ERHY), Lys-98, 114-115 (RR), and 183-184 (GN) contribute to the substrate site. Residue His-9 is the Tele-phosphohistidine intermediate of the active site. Residue Glu-87 is the Proton donor/acceptor of the active site.

The protein belongs to the phosphoglycerate mutase family. BPG-dependent PGAM subfamily.

The enzyme catalyses (2R)-2-phosphoglycerate = (2R)-3-phosphoglycerate. It functions in the pathway carbohydrate degradation; glycolysis; pyruvate from D-glyceraldehyde 3-phosphate: step 3/5. In terms of biological role, catalyzes the interconversion of 2-phosphoglycerate and 3-phosphoglycerate. This Bacillus anthracis (strain A0248) protein is 2,3-bisphosphoglycerate-dependent phosphoglycerate mutase.